A 1673-amino-acid polypeptide reads, in one-letter code: MILKSFLLGNLVSLCMKIINSVVVVGLYYGFLTTFSIGPSYLFLLRAHIMEEGEEGTEKKVSATTGFITGQLIMFISIYYAPLHLALGRPHTITVLALPYLLFHFFCNTHKHFFDYGSTNRNSMRNLSIQCVFLNNLIFQLFNHFILPSSMLARLVNIFMFQCNNKIIFVTSSFVGWIIGHIILMKSIGLLVVWIRKNRSIRKYIRSNKSFVSELANSMSIAGILNILLFVTCVYYLGRMPLPIINKKLNNLEKMDQAKLKNNTPLSYIYKNQEDLYLEILGKKDKEKSFSLFEKPILTFFFDYNRWNRPLRYIRKINKNLSVRKETSQYFFYTCQSDGKKRISFTYPPSLSTFGEMIARRISLSTLEKLSADALYTEWLYTNKEKNNNLNNEFINRIEALETVFLSINILDTKTRLCNVETEKKKNCLVNKKNYLVKMDDPFLTGMYRGRINKLFSSSIINQISIENYEKTYELNKIHYNLLPYPNSREYEHKIDPNSPDYEQKIEKLEKIQAQIDLNNRFIFLWTTIIAKLKGQKNSSRINEIGKKPPRWSYKLINELHQNYKKRRKEQGIIQGLRHQLRTRKYKHIYFLNRSTRTLETLKQSNLNNSNMDKKFNNKDLGFISYLEEPDFRRSLIKGSMRAQRRKLVIWGPYQGNPHSPLFLEKKQDFPFPISDLIKLFLNIKDRLGKKSEFEILNKQSPPKRNNQEDVMEFWETIPHGHKTRGILLLAQSTFRKYIKLPLLIIAKNIVRILLRQSPEWDEDFQDWNREIYLKCSSNGLQFSKTKFPKNWLRGGFQIKILYPFHLKPWHRSKLRLYDSDRDLKQQEDFDSCFLTVLGMETEHPFGPPRKTPSFFEPIFKDIDYKVEIRKLNFRVRRIFKKIKKKEAKAFFFIKQKIKELLKGNKIPLFLPREIYESSETQTEKDSIISNQIIHESLSQIRSTGWTNYSQAEEEMKHRIDRRKTIRNEIEIMKKNKINNAESSQKILKILKIKNIELLVKFFIEKIYIEIFLCIINMRRIPLQLFIQSTKKIIDNDKYINNNETNQERINKTKQNKIDFILSMTIKRAFDNLRNSKRKSDIFFDLSYLSQKYVFFKLSQTQIINFNKLRSILQYNGPSFCLKTEIKDFFGRQGIFHSELRHNKLPNYGMNPWKNWLRGHYQYDLSQITSSRLIPQKWRNRINQCQTSQNKDLNKWYSSEKDQLLDSKKKQNSKVYLLPNKEDNLKKNYRYDLLSYKYIHSETKKNYYIYRSSLETNNNQENSTRNKEKFFSILKNIPSKNYLGKSDIIYMEKNKDRKFLYKINKNIKVEPNKDQIKDKNKDQKKDKIHNNGLFYLPIDSNLEINYKKVFFDWMGMNEKILILNCLISNPKVFFFPKFVRLYHKYKEKPWFIPSKLLLFNLNITSNFSENQNINGKQEEYFLKQEEYFLKQEEDFLKQEEDFLKQEEDFLKQEEDFLKQEEDFFKFRPSNSKQYFELNNQNNIEEYFLESTEKLKIFLKGDFPLQLRWAGRVNQLNQKIMNNIQIYGLLLSLINVRKITISYIQRKEMDLGIMSRNLNLTQLMKTGILILEPARLSLKNDGQFFMYQIISISLVHKSKYQSNQRYQKQENVAKNIDKKNSDLLVPEKILSSRRRRELRILISFNLNLKNNTGVDRNTLVYNENKIKKMESIFG.

The next 6 membrane-spanning stretches (helical) occupy residues 18 to 38, 67 to 87, 90 to 110, 127 to 147, 175 to 195, and 218 to 238; these read IINS…FSIG, FITG…HLAL, PHTI…CNTH, LSIQ…HFIL, VGWI…VVWI, and SMSI…YYLG.

The protein belongs to the TIC214 family. In terms of assembly, part of the Tic complex.

The protein localises to the plastid. The protein resides in the chloroplast inner membrane. Involved in protein precursor import into chloroplasts. May be part of an intermediate translocation complex acting as a protein-conducting channel at the inner envelope. The chain is Protein TIC 214 from Lactuca sativa (Garden lettuce).